The chain runs to 163 residues: Phosphopantetheine adenylyltransferase (163 aa).

Position 10 (Ser-10) interacts with substrate. ATP is bound by residues Ser-10–Phe-11 and His-18. 3 residues coordinate substrate: Lys-42, Leu-74, and Arg-88. ATP contacts are provided by residues Gly-89–Arg-91, Glu-99, and Tyr-124–Ser-130.

The protein belongs to the bacterial CoaD family. In terms of assembly, homohexamer. It depends on Mg(2+) as a cofactor.

The protein resides in the cytoplasm. The enzyme catalyses (R)-4'-phosphopantetheine + ATP + H(+) = 3'-dephospho-CoA + diphosphate. The protein operates within cofactor biosynthesis; coenzyme A biosynthesis; CoA from (R)-pantothenate: step 4/5. In terms of biological role, reversibly transfers an adenylyl group from ATP to 4'-phosphopantetheine, yielding dephospho-CoA (dPCoA) and pyrophosphate. The protein is Phosphopantetheine adenylyltransferase of Bacillus mycoides (strain KBAB4) (Bacillus weihenstephanensis).